The sequence spans 123 residues: Putative hypoxanthine phosphoribosyltransferase (123 aa).

Its function is as follows. May play a role in purine salvage. This chain is Putative hypoxanthine phosphoribosyltransferase, found in Methanosarcina mazei (strain ATCC BAA-159 / DSM 3647 / Goe1 / Go1 / JCM 11833 / OCM 88) (Methanosarcina frisia).